The primary structure comprises 158 residues: NKG2-F type II integral membrane protein (158 aa).

The segment covering 1-12 (MNKQRGTYSEVS) has biased composition (polar residues). Positions 1–25 (MNKQRGTYSEVSLAQDPKRQQRKLK) are disordered. Topologically, residues 1–74 (MNKQRGTYSE…LPPPEKLTAE (74 aa)) are cytoplasmic. The helical; Signal-anchor for type II membrane protein transmembrane segment at 75 to 95 (VLGIICIVLMATVLKTIVLIP) threads the bilayer. Residues 96–158 (CIGVLEQNNF…VLRRTLICFL (63 aa)) lie on the Extracellular side of the membrane.

Can form disulfide-bonded heterodimer with CD94. Natural killer cells.

The protein resides in the membrane. Functionally, may play a role as a receptor for the recognition of MHC class I HLA-E molecules by NK cells. This chain is NKG2-F type II integral membrane protein (KLRC4), found in Homo sapiens (Human).